We begin with the raw amino-acid sequence, 375 residues long: Succinyl-diaminopimelate desuccinylase (375 aa).

H66 lines the Zn(2+) pocket. D68 is a catalytic residue. Zn(2+) is bound at residue D99. The active-site Proton acceptor is the E133. Positions 134, 162, and 348 each coordinate Zn(2+).

It belongs to the peptidase M20A family. DapE subfamily. In terms of assembly, homodimer. It depends on Zn(2+) as a cofactor. Co(2+) is required as a cofactor.

It catalyses the reaction N-succinyl-(2S,6S)-2,6-diaminopimelate + H2O = (2S,6S)-2,6-diaminopimelate + succinate. It participates in amino-acid biosynthesis; L-lysine biosynthesis via DAP pathway; LL-2,6-diaminopimelate from (S)-tetrahydrodipicolinate (succinylase route): step 3/3. Functionally, catalyzes the hydrolysis of N-succinyl-L,L-diaminopimelic acid (SDAP), forming succinate and LL-2,6-diaminopimelate (DAP), an intermediate involved in the bacterial biosynthesis of lysine and meso-diaminopimelic acid, an essential component of bacterial cell walls. In Cronobacter sakazakii (strain ATCC BAA-894) (Enterobacter sakazakii), this protein is Succinyl-diaminopimelate desuccinylase.